The chain runs to 597 residues: Uptake hydrogenase large subunit (597 aa).

Residues cysteine 75, cysteine 78, cysteine 576, and cysteine 579 each contribute to the Ni(2+) site.

The protein belongs to the [NiFe]/[NiFeSe] hydrogenase large subunit family. In terms of assembly, heterodimer of a large and a small subunit. Ni(2+) serves as cofactor.

The protein localises to the cell membrane. It carries out the reaction H2 + A = AH2. In terms of biological role, this enzyme recycles the H(2) produced by nitrogenase to increase the production of ATP and to protect nitrogenase against inhibition or damage by O(2) under carbon- or phosphate-limited conditions. The sequence is that of Uptake hydrogenase large subunit (hupB) from Rhodobacter capsulatus (Rhodopseudomonas capsulata).